The primary structure comprises 349 residues: tRNA uridine(34) hydroxylase (349 aa).

Positions 146 to 240 (DDPDAVFIDM…YARRAREQGL (95 aa)) constitute a Rhodanese domain. The active-site Cysteine persulfide intermediate is the Cys-200. The segment covering 316 to 328 (EEQRRRRAGRENG) has biased composition (basic and acidic residues). A disordered region spans residues 316 to 349 (EEQRRRRAGRENGNKIFNKSRGRLNTKLGIPDPE).

This sequence belongs to the TrhO family.

The enzyme catalyses uridine(34) in tRNA + AH2 + O2 = 5-hydroxyuridine(34) in tRNA + A + H2O. In terms of biological role, catalyzes oxygen-dependent 5-hydroxyuridine (ho5U) modification at position 34 in tRNAs. The protein is tRNA uridine(34) hydroxylase of Enterobacter sp. (strain 638).